Consider the following 210-residue polypeptide: 3-phospho-D-glycerate guanylyltransferase (210 aa).

The protein belongs to the CofC family.

The catalysed reaction is (2R)-3-phosphoglycerate + GTP + H(+) = 3-[(R)-glyceryl]-diphospho-5'-guanosine + diphosphate. Its pathway is cofactor biosynthesis; coenzyme F420 biosynthesis. Functionally, guanylyltransferase that catalyzes the activation of (2R)-3-phosphoglycerate (3PG) as 3-[(R)-glyceryl]-diphospho-5'-guanosine, via the condensation of 3PG with GTP. It is involved in the biosynthesis of a derivative of the hydride carrier cofactor coenzyme F420, 3PG-F420. This Colwellia psychrerythraea (strain 34H / ATCC BAA-681) (Vibrio psychroerythus) protein is 3-phospho-D-glycerate guanylyltransferase.